The following is a 355-amino-acid chain: Protein RecA (355 aa).

Residue 65 to 72 (GPESSGKT) participates in ATP binding. The disordered stretch occupies residues 333–355 (IEEKDEKQAEAEKNENTNLFDEE). A compositionally biased stretch (basic and acidic residues) spans 336–347 (KDEKQAEAEKNE).

Belongs to the RecA family.

It localises to the cytoplasm. Functionally, can catalyze the hydrolysis of ATP in the presence of single-stranded DNA, the ATP-dependent uptake of single-stranded DNA by duplex DNA, and the ATP-dependent hybridization of homologous single-stranded DNAs. It interacts with LexA causing its activation and leading to its autocatalytic cleavage. In Staphylococcus carnosus (strain TM300), this protein is Protein RecA.